A 174-amino-acid chain; its full sequence is Peptide methionine sulfoxide reductase MsrA (174 aa).

Cysteine 10 is a catalytic residue.

This sequence belongs to the MsrA Met sulfoxide reductase family.

It carries out the reaction L-methionyl-[protein] + [thioredoxin]-disulfide + H2O = L-methionyl-(S)-S-oxide-[protein] + [thioredoxin]-dithiol. The catalysed reaction is [thioredoxin]-disulfide + L-methionine + H2O = L-methionine (S)-S-oxide + [thioredoxin]-dithiol. Functionally, has an important function as a repair enzyme for proteins that have been inactivated by oxidation. Catalyzes the reversible oxidation-reduction of methionine sulfoxide in proteins to methionine. This is Peptide methionine sulfoxide reductase MsrA from Arthrobacter sp. (strain FB24).